The sequence spans 314 residues: tRNA dimethylallyltransferase (314 aa).

Residue 10–17 (GPTAVGKT) coordinates ATP. 12-17 (TAVGKT) serves as a coordination point for substrate. An interaction with substrate tRNA region spans residues 35–38 (DSMQ).

Belongs to the IPP transferase family. Monomer. Mg(2+) serves as cofactor.

It carries out the reaction adenosine(37) in tRNA + dimethylallyl diphosphate = N(6)-dimethylallyladenosine(37) in tRNA + diphosphate. Catalyzes the transfer of a dimethylallyl group onto the adenine at position 37 in tRNAs that read codons beginning with uridine, leading to the formation of N6-(dimethylallyl)adenosine (i(6)A). The protein is tRNA dimethylallyltransferase of Clostridium novyi (strain NT).